The primary structure comprises 466 residues: Benzoate transport protein (466 aa).

Residues 1–22 (MSREINVNQMIDDSKLTPFHWR) are Cytoplasmic-facing. Residues 23–43 (VIILSTLIIIFDGYDLVIYGV) traverse the membrane as a helical segment. Topologically, residues 44-60 (ALPLLMKEWAIDPVTAG) are periplasmic. The chain crosses the membrane as a helical span at residues 61-81 (FIGSIALFGMMFGALIFGTIA). The Cytoplasmic segment spans residues 82–93 (DKLEHLGVSRKK). The chain crosses the membrane as a helical span at residues 94-114 (VIAVCIILFSLCTVLCGFSET). At 115 to 119 (TTQFS) the chain is on the periplasmic side. The helical transmembrane segment at 120-140 (IFRFLAGVGIGGVMPNVIALV) threads the bilayer. Residues 141–150 (SEYAPKKFKS) lie on the Cytoplasmic side of the membrane. Residues 151-171 (FFVTLMFSGYAIGGMTAAFLG) traverse the membrane as a helical segment. Topologically, residues 172–181 (SILVPLYGWK) are periplasmic. The chain crosses the membrane as a helical span at residues 182-202 (IMFMIAGIPLVLLLPLMKVLP). Topologically, residues 203–258 (ESIDYLVRKKKDETVRFIMTKMVPSYQYQPDHVFVLNSSNQNQAQAPVKMIFQEQR) are cytoplasmic. Residues 259–279 (AFSTMMFWCSIFMTLIMVYAL) traverse the membrane as a helical segment. Topologically, residues 280–297 (GNWLPKLMIEAGYNLSKS) are periplasmic. A helical transmembrane segment spans residues 298–318 (LIFLFSLNVGGMIGSILGGYL). At 319 to 325 (ADRYNVK) the chain is on the cytoplasmic side. A helical membrane pass occupies residues 326–346 (FVTMGLLLLGAISLSLLSFQF). Topologically, residues 347–348 (SS) are periplasmic. A helical transmembrane segment spans residues 349-369 (VILYILIACAGAASIGAQIML). Over 370-387 (LAYMAKFYAPNVRSTGIG) the chain is Cytoplasmic. A helical membrane pass occupies residues 388–408 (WGLGMGRVGAILGPILTGWLL). The Periplasmic portion of the chain corresponds to 409 to 414 (SLQLPH). The helical transmembrane segment at 415–435 (FYNFLALSIPAVLGIVTVFLI) threads the bilayer. At 436 to 466 (NDRRMYQPEPISPIANQNDTTTVKVNEAVSH) the chain is on the cytoplasmic side.

The protein belongs to the major facilitator superfamily. Aromatic acid:H(+) symporter (AAHS) (TC 2.A.1.15) family.

It localises to the cell inner membrane. Functionally, probable uptake of benzoate. This is Benzoate transport protein (benK) from Acinetobacter baylyi (strain ATCC 33305 / BD413 / ADP1).